The sequence spans 779 residues: MFNSTMDIDPHLRVRERMNQRKQSRSIYHSINDKKKTISRPNPSINIAIMTQTSQMKVVIVGGSIAGLTLAHCLSRYGIDYIILERRHDIAPQVGASTWDENGRLLSETDAPILTGKRLGYTITFLERETLLEILYRHLPDKSKVLTGKYVRSIEQDSKEAVVICEDGSRYSGDVIAGADGIHSTIRSEMRRQIAKEGTTKDLEALKRDEIALSAEYSCLFGISKPIPGLEIGHTHRSSGKGASTLLFGGVDGKLYWFLFTKNEERTFGDGIPRYKKGDETNHVAKYMHHHVSGNILLSEVWKNRIVANFVTIEEMENEHWNWNRVACLGDSIHKMTPNLGQGANCAIESAAEMANSLAKALRDDGSKPAIEDINSALSLYHQKRNVRANLIVKAANKFTRVEALATTGDWVASMFIIPRLGDILADRGAKVQVGATKLDCLPMPKRALEGTMPWSTNSGIGKEENRKRRAQLALPLILIALWFFWKKTPEPKGFPVTKTFSEVKLDMLSSIANAIPFATIWTIESYRRGNALTVANIFPTAFLLLAQKLGIELVAPIYFFFHYVQSPQENFAALDNRLTNIAFAKILPLAILSIFLGPSYCIWSSIELESAQWIYDNAWYWYPVYLTMFLRILKFIVKDTTRLNRIYKPTADLSYLRISYSISILICAAFYLYGSLSSSTSIAFLTQELQPPIQPIQAILGAFSELWAAKQTSLYGAAFYWTFLHFADLKFVGKSKQSWLLILTIXLSSTFLAGPGVGLIVMWAWREEIMAKKHVVPE.

4 residues coordinate FAD: E85, R128, D331, and A344. The next 7 helical transmembrane spans lie at 471–491 (AQLALPLILIALWFFWKKTPE), 504–524 (VKLDMLSSIANAIPFATIWTI), 542–562 (AFLLLAQKLGIELVAPIYFFF), 587–607 (ILPLAILSIFLGPSYCIWSSI), 618–638 (NAWYWYPVYLTMFLRILKFIV), 665–685 (ILICAAFYLYGSLSSSTSIAF), and 742–762 (LILTIXLSSTFLAGPGVGLIV).

This sequence belongs to the paxM FAD-dependent monooxygenase family. Requires FAD as cofactor.

The protein resides in the membrane. The protein operates within polyketide biosynthesis. FAD-dependent monooxygenase; part of the gene cluster B that mediates the biosynthesis of botcinic acid and its botcinin derivatives, acetate-derived polyketides that contribute to virulence when combined with the sesquiterpene botrydial. Botcinic acid and its derivatives have been shown to induce chlorosis and necrosis during host plant infection, but also have antifungal activities. Two polyketide synthases, BOA6 and BOA9, are involved in the biosynthesis of botcinins. BOA6 mediates the formation of the per-methylated tetraketide core by condensation of four units of malonyl-CoA with one unit of acetyl-CoA, which would be methylated in activated methylene groups to yield a bicyclic acid intermediate that could then either be converted to botrylactone derivatives or lose the starter acetate unit through a retro-Claisen type C-C bond cleavage to yield botcinin derivatives. The second polyketide synthase, BOA9, is probably required for the biosynthesis of the tetraketide side chain of botcinins. The methyltransferase (MT) domain within BOA6 is probably responsible for the incorporation of four methyl groups. The trans-enoyl reductase BOA5 might take over the enoyl reductase function of BOA6 that misses an ER domain. The monooxygenases BOA2, BOA3 and BOA4 might be involved in further hydroxylations at C4, C5 and C8, whereas BOA7, close to BOA9, could potentially be involved in the hydroxylation at C4 in the side chain of botcinins. This is FAD-dependent monooxygenase BOA8 from Botryotinia fuckeliana (strain B05.10) (Noble rot fungus).